The following is a 655-amino-acid chain: FYVE, RhoGEF and PH domain-containing protein 2 (655 aa).

Phosphoserine occurs at positions 11 and 48. Residues Val-18–Glu-64 form a disordered region. Basic and acidic residues predominate over residues Gln-32–Asn-56. The DH domain occupies Pro-102–Ala-290. The region spanning Thr-319 to Asp-418 is the PH 1 domain. The segment at Asp-458–Thr-518 adopts an FYVE-type zinc-finger fold. Cys-464, Cys-467, Cys-481, Cys-484, Cys-489, Cys-492, Cys-510, and Cys-513 together coordinate Zn(2+). The 98-residue stretch at Gln-544–Ser-641 folds into the PH 2 domain. At Ser-654 the chain carries Phosphoserine.

The protein resides in the cytoplasm. It localises to the cytoskeleton. The protein localises to the nucleus. It is found in the early endosome. Its subcellular location is the early endosome membrane. The protein resides in the cell projection. It localises to the ruffle membrane. Functionally, activates CDC42, a member of the Ras-like family of Rho- and Rac proteins, by exchanging bound GDP for free GTP. Activates JNK1 via CDC42 but not RAC1. Binds to phosphatidylinositol 4,5-bisphosphate, phosphatidylinositol 3,4,5-trisphosphate, phosphatidylinositol 5-monophosphate, phosphatidylinositol 4-monophosphate and phosphatidylinositol 3-monophosphate. This chain is FYVE, RhoGEF and PH domain-containing protein 2 (FGD2), found in Homo sapiens (Human).